A 290-amino-acid chain; its full sequence is OTU domain-containing protein 6A (290 aa).

The disordered stretch occupies residues Q27 to A117. A compositionally biased stretch (basic and acidic residues) spans S49–E68. The span at K95–R108 shows a compositional bias: basic residues. The OTU domain maps to L142–I276. Residues I147–C153 form a cys-loop region. The active site involves D150. The Nucleophile role is filled by C153. Residues I211–L221 form a variable-loop region. Residues Y259–H269 are his-loop. H269 is a catalytic residue.

It carries out the reaction Thiol-dependent hydrolysis of ester, thioester, amide, peptide and isopeptide bonds formed by the C-terminal Gly of ubiquitin (a 76-residue protein attached to proteins as an intracellular targeting signal).. Deubiquitinating enzyme that hydrolyzes 'Lys-27'-, 'Lys-29'- and 'Lys-33'-linked polyubiquitin chains. Also able to hydrolyze 'Lys-11'-linked ubiquitin chains. The chain is OTU domain-containing protein 6A (Otud6a) from Mus musculus (Mouse).